The sequence spans 474 residues: Pyruvate kinase (474 aa).

Arg32 is a binding site for substrate. Residues Asn34, Ser36, and Asp66 each coordinate K(+). 34–37 (NFSH) is an ATP binding site. ATP-binding residues include Arg73 and Lys155. Mg(2+) is bound at residue Glu221. Positions 244, 245, and 277 each coordinate substrate. Residue Asp245 coordinates Mg(2+).

The protein belongs to the pyruvate kinase family. As to quaternary structure, homotetramer. It depends on Mg(2+) as a cofactor. Requires K(+) as cofactor.

The enzyme catalyses pyruvate + ATP = phosphoenolpyruvate + ADP + H(+). The protein operates within carbohydrate degradation; glycolysis; pyruvate from D-glyceraldehyde 3-phosphate: step 5/5. This chain is Pyruvate kinase (pykF), found in Clostridium perfringens (strain 13 / Type A).